Consider the following 424-residue polypeptide: Light-independent protochlorophyllide reductase subunit N (424 aa).

Residues C27, C52, and C113 each coordinate [4Fe-4S] cluster.

Belongs to the BchN/ChlN family. As to quaternary structure, protochlorophyllide reductase is composed of three subunits; BchL, BchN and BchB. Forms a heterotetramer of two BchB and two BchN subunits. It depends on [4Fe-4S] cluster as a cofactor.

The catalysed reaction is chlorophyllide a + oxidized 2[4Fe-4S]-[ferredoxin] + 2 ADP + 2 phosphate = protochlorophyllide a + reduced 2[4Fe-4S]-[ferredoxin] + 2 ATP + 2 H2O. It participates in porphyrin-containing compound metabolism; bacteriochlorophyll biosynthesis (light-independent). Its function is as follows. Component of the dark-operative protochlorophyllide reductase (DPOR) that uses Mg-ATP and reduced ferredoxin to reduce ring D of protochlorophyllide (Pchlide) to form chlorophyllide a (Chlide). This reaction is light-independent. The NB-protein (BchN-BchB) is the catalytic component of the complex. In Halorhodospira halophila (strain DSM 244 / SL1) (Ectothiorhodospira halophila (strain DSM 244 / SL1)), this protein is Light-independent protochlorophyllide reductase subunit N.